The chain runs to 142 residues: Ribosomal RNA large subunit methyltransferase H (142 aa).

2 residues coordinate S-adenosyl-L-methionine: Leu-55 and Gly-87.

Belongs to the RNA methyltransferase RlmH family. As to quaternary structure, homodimer.

The protein localises to the cytoplasm. It carries out the reaction pseudouridine(1915) in 23S rRNA + S-adenosyl-L-methionine = N(3)-methylpseudouridine(1915) in 23S rRNA + S-adenosyl-L-homocysteine + H(+). Specifically methylates the pseudouridine at position 1915 (m3Psi1915) in 23S rRNA. The protein is Ribosomal RNA large subunit methyltransferase H of Sphingopyxis alaskensis (strain DSM 13593 / LMG 18877 / RB2256) (Sphingomonas alaskensis).